The chain runs to 280 residues: Tryptophan synthase alpha chain (280 aa).

Catalysis depends on proton acceptor residues E50 and D61.

Belongs to the TrpA family. Tetramer of two alpha and two beta chains.

It carries out the reaction (1S,2R)-1-C-(indol-3-yl)glycerol 3-phosphate + L-serine = D-glyceraldehyde 3-phosphate + L-tryptophan + H2O. It functions in the pathway amino-acid biosynthesis; L-tryptophan biosynthesis; L-tryptophan from chorismate: step 5/5. Its function is as follows. The alpha subunit is responsible for the aldol cleavage of indoleglycerol phosphate to indole and glyceraldehyde 3-phosphate. The chain is Tryptophan synthase alpha chain from Methylorubrum extorquens (strain CM4 / NCIMB 13688) (Methylobacterium extorquens).